The sequence spans 592 residues: V-type ATP synthase alpha chain (592 aa).

Position 232-239 (232-239) interacts with ATP; sequence GPFGSGKT.

This sequence belongs to the ATPase alpha/beta chains family.

The enzyme catalyses ATP + H2O + 4 H(+)(in) = ADP + phosphate + 5 H(+)(out). Functionally, produces ATP from ADP in the presence of a proton gradient across the membrane. The V-type alpha chain is a catalytic subunit. This is V-type ATP synthase alpha chain from Clostridioides difficile (strain 630) (Peptoclostridium difficile).